The primary structure comprises 709 residues: Elongation factor G (709 aa).

The tr-type G domain maps to 6 to 295 (KFLRNIGIMA…AVCTYLPSPL (290 aa)). Residues 15–22 (AHIDAGKT), 92–96 (DTPGH), and 146–149 (NKMD) contribute to the GTP site.

Belongs to the TRAFAC class translation factor GTPase superfamily. Classic translation factor GTPase family. EF-G/EF-2 subfamily.

The protein resides in the cytoplasm. Catalyzes the GTP-dependent ribosomal translocation step during translation elongation. During this step, the ribosome changes from the pre-translocational (PRE) to the post-translocational (POST) state as the newly formed A-site-bound peptidyl-tRNA and P-site-bound deacylated tRNA move to the P and E sites, respectively. Catalyzes the coordinated movement of the two tRNA molecules, the mRNA and conformational changes in the ribosome. This is Elongation factor G from Amoebophilus asiaticus (strain 5a2).